The chain runs to 142 residues: Large ribosomal subunit protein uL22c (142 aa).

Belongs to the universal ribosomal protein uL22 family. Part of the 50S ribosomal subunit.

The protein resides in the plastid. The protein localises to the chloroplast. This protein binds specifically to 23S rRNA. Functionally, the globular domain of the protein is located near the polypeptide exit tunnel on the outside of the subunit, while an extended beta-hairpin is found that lines the wall of the exit tunnel in the center of the 70S ribosome. The protein is Large ribosomal subunit protein uL22c (rpl22) of Pinus koraiensis (Korean pine).